A 148-amino-acid polypeptide reads, in one-letter code: MTIWVDADACPKMIKDILFRAAIRTNTNLILVANSYLTYPNSPFIRSVLVEKGYDRADHYITSHMKAKDLVITADIPLAAEVIVKQGLAMSPRGELFTANNIKQRLTLRDINEQLRSAGERTGGPSALSAREKTNFANALDRWLAKSK.

It belongs to the UPF0178 family.

In Legionella pneumophila (strain Paris), this protein is UPF0178 protein lpp0103.